The following is a 1980-amino-acid chain: Sodium channel protein type 8 subunit alpha (1980 aa).

Disordered regions lie at residues 1 to 20 and 28 to 62; these read MAAR…FTPE and RIAE…LEAG. The Cytoplasmic segment spans residues 1 to 132; the sequence is MAARLLAPPG…RIAIKILIHS (132 aa). Residues 28–61 show a composition bias toward basic and acidic residues; it reads RIAESKLKKPPKADGSHREDDEDSKPKPNSDLEA. The I repeat unit spans residues 114–442; the sequence is ILSPFNLIRR…KAMLEQLKKQ (329 aa). Residues 133–151 traverse the membrane as a helical segment; it reads VFSMIIMCTILTNCVFMTF. At 152–158 the chain is on the extracellular side; the sequence is SNPPDWS. Residues 159–179 form a helical membrane-spanning segment; it reads KNVEYTFTGIYTFESLVKIIA. Residues 180–193 lie on the Cytoplasmic side of the membrane; it reads RGFCIDGFTFLRDP. Residues 194 to 211 form a helical membrane-spanning segment; the sequence is WNWLDFSVIMMAYITEFV. The Extracellular portion of the chain corresponds to 212–217; sequence NLGNVS. Asn215 carries N-linked (GlcNAc...) asparagine glycosylation. The helical transmembrane segment at 218-234 threads the bilayer; it reads ALRTFRVLRALKTISVI. At 235 to 253 the chain is on the cytoplasmic side; it reads PGLKTIVGALIQSVKKLSD. A helical membrane pass occupies residues 254–273; sequence VMILTVFCLSVFALIGLQLF. Residues 274–355 lie on the Extracellular side of the membrane; it reads MGNLRNKCVV…PNYGYTSFDT (82 aa). Residues Cys281 and Cys333 are joined by a disulfide bond. N-linked (GlcNAc...) asparagine glycans are attached at residues Asn289, Asn295, and Asn308. A glycan (N-linked (GlcNAc...) (high mannose) asparagine) is linked at Asn326. Residues 356–380 constitute an intramembrane region (pore-forming); sequence FSWAFLALFRLMTQDYWENLYQLTL. Residue Glu373 participates in Na(+) binding. Residues 381-387 lie on the Extracellular side of the membrane; it reads RAAGKTY. A helical membrane pass occupies residues 388 to 408; it reads MIFFVLVIFVGSFYLVNLILA. The Cytoplasmic segment spans residues 409-753; sequence VVAMAYEEQN…EIVNLIVMDP (345 aa). Disordered stretches follow at residues 446–530 and 568–602; these read AQAA…KAFR and FRGP…DSLF. The segment covering 474–486 has biased composition (low complexity); the sequence is PRSSSEISKLSSK. The span at 489 to 500 shows a compositional bias: basic residues; that stretch reads KERRNRRKKRKQ. Basic and acidic residues-rich tracts occupy residues 501-530 and 586-602; these read KELS…KAFR and DEHS…DSLF. 2 positions are modified to phosphoserine: Ser518 and Ser520. Residues 735–1007 form an II repeat; that stretch reads CHPYWIKLKE…QISVIRIKKG (273 aa). The helical transmembrane segment at 754–772 threads the bilayer; the sequence is FVDLAITICIVLNTLFMAM. Residues 773 to 783 lie on the Extracellular side of the membrane; that stretch reads EHHPMTPQFEH. The chain crosses the membrane as a helical span at residues 784–803; it reads VLAVGNLVFTGIFTAEMFLK. Residues 804-817 lie on the Cytoplasmic side of the membrane; that stretch reads LIAMDPYYYFQEGW. A helical membrane pass occupies residues 818–837; the sequence is NIFDGFIVSLSLMELSLADV. Over 838 to 839 the chain is Extracellular; that stretch reads EG. A helical transmembrane segment spans residues 840–857; that stretch reads LSVLRSFRLLRVFKLAKS. Topologically, residues 858–873 are cytoplasmic; sequence WPTLNMLIKIIGNSVG. A helical membrane pass occupies residues 874-892; sequence ALGNLTLVLAIIVFIFAVV. Residues 893–921 are Extracellular-facing; the sequence is GMQLFGKSYKECVCKINQDCELPRWHMHD. A disulfide bridge connects residues Cys906 and Cys912. Residues 922–942 constitute an intramembrane region (pore-forming); that stretch reads FFHSFLIVFRVLCGEWIETMW. Positions 936 and 939 each coordinate Na(+). At 943-955 the chain is on the extracellular side; the sequence is DCMEVAGQAMCLI. A disulfide bridge links Cys944 with Cys953. A helical membrane pass occupies residues 956–976; that stretch reads VFMMVMVIGNLVVLNLFLALL. Residues 977-1199 lie on the Cytoplasmic side of the membrane; sequence LSSFSADNLA…TCFLIVEHNW (223 aa). The tract at residues 1107–1148 is disordered; sequence NLNTEDVSSESDPEGSKDKLDDTSSSEGSTIDIKPEVEEVPV. An III repeat occupies 1180–1495; the sequence is LGKSWWILRK…KKYYNAMKKL (316 aa). Residues 1200–1217 form a helical membrane-spanning segment; that stretch reads FETFIIFMILLSSGALAF. Topologically, residues 1218–1230 are extracellular; that stretch reads EDIYIEQRKTIRT. Residues 1231–1249 traverse the membrane as a helical segment; it reads ILEYADKVFTYIFILEMLL. At 1250-1263 the chain is on the cytoplasmic side; the sequence is KWTAYGFVKFFTNA. A helical transmembrane segment spans residues 1264 to 1282; the sequence is WCWLDFLIVAVSLVSLIAN. Residues 1283 to 1290 lie on the Extracellular side of the membrane; sequence ALGYSELG. The helical transmembrane segment at 1291–1309 threads the bilayer; the sequence is AIKSLRTLRALRPLRALSR. The Cytoplasmic segment spans residues 1310–1326; the sequence is FEGMRVVVNALVGAIPS. The chain crosses the membrane as a helical span at residues 1327–1346; it reads IMNVLLVCLIFWLIFSIMGV. Residues 1347 to 1399 lie on the Extracellular side of the membrane; it reads NLFAGKYHYCFNETSEIRFEIEDVNNKTECEKLMEGNNTEIRWKNVKINFDNV. Residues Cys1356 and Cys1376 are joined by a disulfide bond. Asn1358, Asn1372, and Asn1383 each carry an N-linked (GlcNAc...) asparagine glycan. Residues 1400 to 1421 constitute an intramembrane region (pore-forming); that stretch reads GAGYLALLQVATFKGWMDIMYA. Topologically, residues 1422–1438 are extracellular; the sequence is AVDSRKPDEQPKYEDNI. Residues 1439 to 1460 form a helical membrane-spanning segment; it reads YMYIYFVIFIIFGSFFTLNLFI. Residues 1461-1523 lie on the Cytoplasmic side of the membrane; it reads GVIIDNFNQQ…IVFDFVTQQA (63 aa). Phosphoserine; by PKC is present on Ser1497. Residues 1504–1801 form an IV repeat; sequence IPRPLNKIQG…WEKFDPDATQ (298 aa). The chain crosses the membrane as a helical span at residues 1524-1541; sequence FDIVIMMLICLNMVTMMV. The Extracellular portion of the chain corresponds to 1542 to 1552; it reads ETDTQSKQMEN. A helical membrane pass occupies residues 1553–1571; that stretch reads ILYWINLVFVIFFTCECVL. At 1572-1583 the chain is on the cytoplasmic side; sequence KMFALRHYYFTI. The chain crosses the membrane as a helical span at residues 1584–1601; the sequence is GWNIFDFVVVILSIVGMF. At 1602–1614 the chain is on the extracellular side; that stretch reads LADIIEKYFVSPT. The helical transmembrane segment at 1615-1631 threads the bilayer; it reads LFRVIRLARIGRILRLI. At 1632-1650 the chain is on the cytoplasmic side; it reads KGAKGIRTLLFALMMSLPA. A helical membrane pass occupies residues 1651–1668; the sequence is LFNIGLLLFLVMFIFSIF. Topologically, residues 1669–1690 are extracellular; that stretch reads GMSNFAYVKHEAGIDDMFNFET. An intramembrane region (pore-forming) is located at residues 1691–1713; that stretch reads FGNSMICLFQITTSAGWDGLLLP. The Extracellular segment spans residues 1714-1742; sequence ILNRPPDCSLDKEHPGSGFKGDCGNPSVG. An intrachain disulfide couples Cys1721 to Cys1736. A helical transmembrane segment spans residues 1743–1765; that stretch reads IFFFVSYIIISFLIVVNMYIAII. The Cytoplasmic portion of the chain corresponds to 1766 to 1980; sequence LENFSVATEE…RQKEVRESKC (215 aa). The region spanning 1895 to 1924 is the IQ domain; the sequence is EEVSAVVLQRAYRGHLARRGFICKKTTSNK. The disordered stretch occupies residues 1922–1980; the sequence is SNKLENGGTHREKKESTPSTASLPSYDSVTKPEKEKQQRAEEGRRERAKRQKEVRESKC. Over residues 1938–1949 the composition is skewed to polar residues; sequence TPSTASLPSYDS. Positions 1951–1980 are enriched in basic and acidic residues; sequence TKPEKEKQQRAEEGRRERAKRQKEVRESKC.

This sequence belongs to the sodium channel (TC 1.A.1.10) family. Nav1.6/SCN8A subfamily. In terms of assembly, the voltage-sensitive sodium channel consists of an ion-conducting pore-forming alpha subunit regulated by one or more beta-1 (SCN1B), beta-2 (SCN2B), beta-3 (SCN3B) and/or beta-4 (SCN4B) subunits. Beta-1 (SCN1B) and beta-3 (SCN3B) are non-covalently associated with alpha, while beta-2 (SCN2B) and beta-4 (SCN4B) are covalently linked by disulfide bonds. Interacts with NEDD4 and NEDD4L. Interacts with FGF13. Interacts with FGF14, GBG3, GBB2 and SCN1B. Interacts with TMEM233. Interacts with the conotoxin GVIIJ. Interacts with the spider beta/delta-theraphotoxin-Pre1a. Interacts with CALM1; the interaction modulates the inactivation rate of SCN8A. May be ubiquitinated by NEDD4L; which would promote its endocytosis. Post-translationally, phosphorylation at Ser-1497 by PKC in a highly conserved cytoplasmic loop slows inactivation of the sodium channel and reduces peak sodium currents. As to expression, expressed in the hippocampus with increased expression in epileptic tissue compared to normal adjacent tissue (at protein level). In terms of tissue distribution, expressed in non-neuronal tissues, such as monocytes/macrophages.

The protein resides in the cell membrane. The protein localises to the cell projection. Its subcellular location is the axon. It is found in the cytoplasmic vesicle. It localises to the podosome. The enzyme catalyses Na(+)(in) = Na(+)(out). Inhibited by tetrodotoxin and, more weakly, by its metabolite 4,9-ah-tetrodotoxin. Its function is as follows. Pore-forming subunit of a voltage-gated sodium channel complex assuming opened or closed conformations in response to the voltage difference across membranes and through which sodium ions selectively pass along their electrochemical gradient. Contributes to neuronal excitability by regulating action potential threshold and propagation. More specifically expressed in non-neuronal cells, could play a role in sodium release from intracellular compartments and participate in the control of podosomes formation and macrophages adhesion and movement. The protein is Sodium channel protein type 8 subunit alpha of Homo sapiens (Human).